The sequence spans 359 residues: Proton-coupled zinc antiporter SLC30A2 (359 aa).

At 1–56 the chain is on the cytoplasmic side; it reads MASRSFFGALWKSEASRIPPVNLPSVELAVQSNHYCHAQKDSGSHPNSEKQRARRK. The short motif at 34–37 is the Mitochondrial localization signal element; it reads HYCH. Cys-36 is a binding site for Zn(2+). The helical transmembrane segment at 57–77 threads the bilayer; the sequence is LYVASAICLVFMIGEIIGGYL. Residues 78–86 lie on the Lumenal side of the membrane; it reads AQSLAIMTD. A helical membrane pass occupies residues 87–107; it reads AAHLLTDFASMLISLFSLWVS. The Zn(2+) site is built by His-89 and Asp-93. At 108 to 123 the chain is on the cytoplasmic side; it reads SRPATKTMNFGWQRAE. Residues 124–144 form a helical membrane-spanning segment; sequence ILGALLSVLSIWVVTGVLVYL. Residues 145–159 are Lumenal-facing; it reads AVQRLISGDYEIKGD. Residues 160–180 traverse the membrane as a helical segment; that stretch reads TMLITSGCAVAVNIIMGLALH. Residues 181 to 207 are Cytoplasmic-facing; it reads QSGHGHSHGHSHEDSSQQQQNPSVRAA. The chain crosses the membrane as a helical span at residues 208–228; the sequence is FIHVVGDLLQSVGVLVAAYII. 2 residues coordinate Zn(2+): His-210 and Asp-214. At 229 to 236 the chain is on the lumenal side; that stretch reads YFKPEYKY. The chain crosses the membrane as a helical span at residues 237-257; it reads VDPICTFLFSILVLGTTLTIL. The Cytoplasmic segment spans residues 258-291; sequence RDVILVLMEGTPKGVDFTTVKNLLLSVDGVEALH. The short motif at 281–282 is the Lysosomal targeting motif element; it reads LL. The residue at position 283 (Ser-283) is a Phosphoserine. His-291, His-308, and Glu-342 together coordinate Zn(2+). A helical transmembrane segment spans residues 292-312; the sequence is SLHIWALTVAQPVLSVHIAIA. Residues 313 to 359 are Lumenal-facing; that stretch reads QNVDAQAVLKVARDRLQGKFNFHTMTIQIESYSEDMKSCQECQGPSE.

It belongs to the cation diffusion facilitator (CDF) transporter (TC 2.A.4) family. SLC30A subfamily. As to quaternary structure, homodimer. Interacts (via lysosomal targeting motif) with AP3D1; in AP-3-mediated transport to lysosomes. Interacts with TMEM163. Post-translationally, phosphorylated at Ser-283. Phosphorylation at Ser-283 prevents localization to lysosomes. Dephosphorylation of Ser-283 which triggers localization to lysosomes, accumulation of zinc into lysosomes and lysosomal-mediated cell death is induced by TNF-alpha. Detected in intestine, kidney, seminal vesicles and testis.

Its subcellular location is the cytoplasmic vesicle. The protein resides in the secretory vesicle membrane. It is found in the zymogen granule membrane. The protein localises to the endosome membrane. It localises to the lysosome membrane. Its subcellular location is the mitochondrion inner membrane. It carries out the reaction Zn(2+)(in) + 2 H(+)(out) = Zn(2+)(out) + 2 H(+)(in). Its function is as follows. Electroneutral proton-coupled antiporter concentrating zinc ions into a variety of intracellular organelles including endosomes, zymogen granules and mitochondria. Thereby, plays a crucial role in cellular zinc homeostasis to confer upon cells protection against its potential cytotoxicity. Regulates the zinc concentration of milk, through the transport of zinc ions into secretory vesicles of mammary cells. By concentrating zinc ions into lysosomes participates to lysosomal-mediated cell death during early mammary gland involution. The protein is Proton-coupled zinc antiporter SLC30A2 of Rattus norvegicus (Rat).